The chain runs to 88 residues: MANSPQAKKRARQNDKARAHNASLRSMVRTYLKKVVAAIEAGDAETAKAAYAVAIPVLDRVADKGIIHKNKAARHKSRLNAKIKALSA.

The segment at 1–23 (MANSPQAKKRARQNDKARAHNAS) is disordered.

This sequence belongs to the bacterial ribosomal protein bS20 family.

Functionally, binds directly to 16S ribosomal RNA. The sequence is that of Small ribosomal subunit protein bS20 from Saccharophagus degradans (strain 2-40 / ATCC 43961 / DSM 17024).